A 126-amino-acid chain; its full sequence is Small ribosomal subunit protein uS12m (126 aa).

Positions 1–11 are enriched in polar residues; sequence MATSNQMGANT. The tract at residues 1 to 21 is disordered; it reads MATSNQMGANTRSKKKKKNLK. Basic residues predominate over residues 12-21; sequence RSKKKKKNLK.

Belongs to the universal ribosomal protein uS12 family.

The protein localises to the mitochondrion. Protein S12 is involved in the translation initiation step. The sequence is that of Small ribosomal subunit protein uS12m (RPS12) from Bigelowiella natans (Pedinomonas minutissima).